Reading from the N-terminus, the 82-residue chain is Small ribosomal subunit protein bS18 (82 aa).

The interval 1 to 21 (MKRNNSKKVRVEPTRRPKKNP) is disordered.

This sequence belongs to the bacterial ribosomal protein bS18 family. Part of the 30S ribosomal subunit. Forms a tight heterodimer with protein bS6.

In terms of biological role, binds as a heterodimer with protein bS6 to the central domain of the 16S rRNA, where it helps stabilize the platform of the 30S subunit. This is Small ribosomal subunit protein bS18 from Corynebacterium kroppenstedtii (strain DSM 44385 / JCM 11950 / CIP 105744 / CCUG 35717).